We begin with the raw amino-acid sequence, 1038 residues long: Elongation factor 3 (1038 aa).

HEAT repeat units lie at residues 93 to 131 (EAYL…SANK), 133 to 170 (STIR…VAPY), 174 to 211 (RCLP…VVGN), 213 to 249 (DIEP…TVEA), 255 to 287 (MEPL…LMDD), and 292 to 331 (QLFI…AGGS). An ADP-binding site is contributed by glutamate 406. ABC transporter domains follow at residues 426–654 (IFIE…YYEL) and 680–995 (IRLT…EEVT). Positions 716, 924, 927, and 953 each coordinate ADP. Residues 1012–1038 (RKEKKAKDKARKEAEARGEYYSDSDEE) are disordered. Basic and acidic residues predominate over residues 1021–1031 (ARKEAEARGEY).

Belongs to the ABC transporter superfamily. ABCF family. EF3 subfamily. As to quaternary structure, monomer.

Its subcellular location is the cytoplasm. The enzyme catalyses ATP + H2O = ADP + phosphate + H(+). Its pathway is protein biosynthesis; polypeptide chain elongation. Its function is as follows. Ribosome-dependent ATPase that functions in cytoplasmic translation elongation. Required for the ATP-dependent release of deacylated tRNA from the ribosomal E-site during protein biosynthesis. Stimulates the eEF1A-dependent binding of aminoacyl-tRNA to the ribosomal A-site, which has reduced affinity for tRNA as long as the E-site is occupied. Assists translation termination by stimulating the release of nascent protein from the ribosome by release factors. The sequence is that of Elongation factor 3 from Phytophthora infestans (strain T30-4) (Potato late blight agent).